A 335-amino-acid chain; its full sequence is NADH-quinone oxidoreductase subunit H (335 aa).

A run of 8 helical transmembrane segments spans residues 11–31 (VILTVLRAIVVLLAVVVCGAL), 81–101 (VIFTLAPVVAMSALLIAFVVI), 114–134 (IGLLFFFAMAGLSVYAVLFAG), 154–174 (VSYEVFLGLALMGVVVQVGSF), 187–207 (LWFIIPQFFGFCTFFIAGVAV), 238–258 (FFVGEYIGIILISALLVTLFF), 270–290 (QLSFLWFALKTAFFIMLFILL), and 307–327 (WKFCLPLTLINLLVTAAIVLY).

It belongs to the complex I subunit 1 family. In terms of assembly, NDH-1 is composed of 13 different subunits. Subunits NuoA, H, J, K, L, M, N constitute the membrane sector of the complex.

Its subcellular location is the cell inner membrane. It carries out the reaction a quinone + NADH + 5 H(+)(in) = a quinol + NAD(+) + 4 H(+)(out). Its function is as follows. NDH-1 shuttles electrons from NADH, via FMN and iron-sulfur (Fe-S) centers, to quinones in the respiratory chain. The immediate electron acceptor for the enzyme in this species is believed to be ubiquinone. Couples the redox reaction to proton translocation (for every two electrons transferred, four hydrogen ions are translocated across the cytoplasmic membrane), and thus conserves the redox energy in a proton gradient. This subunit may bind ubiquinone. The chain is NADH-quinone oxidoreductase subunit H from Pseudomonas putida (strain ATCC 700007 / DSM 6899 / JCM 31910 / BCRC 17059 / LMG 24140 / F1).